The primary structure comprises 70 residues: Large ribosomal subunit protein bL31 (70 aa).

4 residues coordinate Zn(2+): Cys-16, Cys-18, Cys-37, and Cys-40.

Belongs to the bacterial ribosomal protein bL31 family. Type A subfamily. As to quaternary structure, part of the 50S ribosomal subunit. Requires Zn(2+) as cofactor.

Its function is as follows. Binds the 23S rRNA. The protein is Large ribosomal subunit protein bL31 of Salmonella agona (strain SL483).